We begin with the raw amino-acid sequence, 450 residues long: Phosphoglucosamine mutase (450 aa).

Catalysis depends on Ser-102, which acts as the Phosphoserine intermediate. Positions 102, 243, 245, and 247 each coordinate Mg(2+). Ser-102 is subject to Phosphoserine.

It belongs to the phosphohexose mutase family. Mg(2+) serves as cofactor. In terms of processing, activated by phosphorylation.

It catalyses the reaction alpha-D-glucosamine 1-phosphate = D-glucosamine 6-phosphate. Its function is as follows. Catalyzes the conversion of glucosamine-6-phosphate to glucosamine-1-phosphate. This Allorhizobium ampelinum (strain ATCC BAA-846 / DSM 112012 / S4) (Agrobacterium vitis (strain S4)) protein is Phosphoglucosamine mutase.